Consider the following 475-residue polypeptide: MSAFQNGGIASRALDDDSDIEEEALANDYKEQVQYEGMEELEQVNSMSMAQQTDDIQSRLAAAAQPLDFSAPLEVKFASYDNYCSLFHFILNSDGPVDLEPPSYYWAWDVIDEFIYQFNSFCSYRNRVARQGTNEEEIQILREAPNTWGCYSVLNVLYSLIQRSQINEQLAAMKRNEEPMAVAGDYGSKSLYRMLGYFSIIGLLRVHCLLGDFSLALKTLDDIELNKKAMFARVMAAHFTTYYYVGFSYMMMRRYADAIRMFSHILIYVSRTKNFQKNAQYDSISKKNDQMYALIAICVAFHPTRLDDTIHTALREKYGDQLLKLQRGGPESLPIFEELFRSACPKFISPTPPDFDNPELNVDPLEHHLSIFMDEVKTNMWSPTVKSYLRLYTTMDVKKLAGFLEVEPEKLRGWLLVNKQRSRQIRWTDNGLLDGEVVNSNDLDYAMQGDLIHISEAKVGRKLVDWYLRNLARTY.

Residues 257–451 enclose the PCI domain; it reads DAIRMFSHIL…DLDYAMQGDL (195 aa).

Belongs to the eIF-3 subunit L family. As to quaternary structure, component of the eukaryotic translation initiation factor 3 (eIF-3) complex.

It is found in the cytoplasm. Its function is as follows. Component of the eukaryotic translation initiation factor 3 (eIF-3) complex, which is involved in protein synthesis of a specialized repertoire of mRNAs and, together with other initiation factors, stimulates binding of mRNA and methionyl-tRNAi to the 40S ribosome. The eIF-3 complex specifically targets and initiates translation of a subset of mRNAs involved in cell proliferation. The chain is Eukaryotic translation initiation factor 3 subunit L from Botryotinia fuckeliana (strain B05.10) (Noble rot fungus).